We begin with the raw amino-acid sequence, 470 residues long: Sperm-associated antigen 8 (470 aa).

The span at 1 to 21 shows a compositional bias: polar residues; it reads METTESTEGSLSRSCDVQPSS. Disordered regions lie at residues 1–70, 117–178, and 302–321; these read METT…PPAH, SGTC…GQGP, and LTTQ…DSYQ. The segment covering 27-48 has biased composition (low complexity); the sequence is PSEPVPSSSSSPRSTAPAEAPA. A compositionally biased stretch (polar residues) spans 51-60; the sequence is SVLTEPSSDS. Low complexity-rich tracts occupy residues 122–175 and 303–316; these read LGQS…ADPG and TTQP…STTQ. Mn regions lie at residues 312–325 and 364–378; these read SSTT…LPRH and ESVT…LVRA.

This sequence belongs to the SPAG8 family. Microtubule inner protein component of sperm flagellar doublet microtubules. Interacts with FHL5 (via second LIM domain). Interacts with RANBP9. As to expression, expressed in testis (at protein level). Not detected in brain, heart, kidney, spleen, liver, lung, thymus and colon (at protein level).

The protein resides in the cytoplasm. It localises to the nucleus. Its subcellular location is the cytoplasmic vesicle. The protein localises to the secretory vesicle. It is found in the acrosome. The protein resides in the cytoskeleton. It localises to the microtubule organizing center. Its subcellular location is the spindle. The protein localises to the cilium axoneme. It is found in the flagellum axoneme. Functionally, microtubule inner protein (MIP) part of the dynein-decorated doublet microtubules (DMTs) in cilia axoneme, which is required for motile cilia beating. Plays a role in spermatogenesis by enhancing the binding of CREM isoform tau to its coactivator FHL5 and increasing the FHL5-regulated transcriptional activation of CREM isoform tau. Involved in the acrosome reaction and in binding of sperm to the zona pellucida. Plays a role in regulation of the cell cycle by controlling progression through the G2/M phase, possibly by delaying the activation of CDK1 which is required for entry into mitosis. May play a role in fertility and microtubule formation through interaction with RANBP9. In Mus musculus (Mouse), this protein is Sperm-associated antigen 8.